We begin with the raw amino-acid sequence, 182 residues long: MNRLSTKLVVAIGIGSALYGILGLWGFSIAPNTFIKPALAILTVFGALFGPVAGLLIGLIGHTVTDTIAGWGIWWGWVISSGIIGFTMGFIQKRVGFSVKNGTYNKGDISYLAITGLIGIVIAIIFAGAFDIIVMGEPFDKIVIQVLGATIADVIVFLVLGLPITIGLAKSNKKHTHLKIEK.

Helical transmembrane passes span 9–29, 40–60, 71–91, 114–134, and 142–162; these read VVAI…GFSI, AILT…IGLI, WGIW…MGFI, ITGL…DIIV, and IVIQ…VLGL.

The protein belongs to the UPF0397 family.

The protein resides in the cell membrane. This Bacillus thuringiensis subsp. konkukian (strain 97-27) protein is UPF0397 protein BT9727_2423.